Consider the following 855-residue polypeptide: DNA mismatch repair protein MutS (855 aa).

616 to 623 (GPNMGGKS) contributes to the ATP binding site.

Belongs to the DNA mismatch repair MutS family.

Functionally, this protein is involved in the repair of mismatches in DNA. It is possible that it carries out the mismatch recognition step. This protein has a weak ATPase activity. In Salmonella schwarzengrund (strain CVM19633), this protein is DNA mismatch repair protein MutS.